The following is an 89-amino-acid chain: Small ribosomal subunit protein uS15 (89 aa).

Belongs to the universal ribosomal protein uS15 family. Part of the 30S ribosomal subunit. Forms a bridge to the 50S subunit in the 70S ribosome, contacting the 23S rRNA.

One of the primary rRNA binding proteins, it binds directly to 16S rRNA where it helps nucleate assembly of the platform of the 30S subunit by binding and bridging several RNA helices of the 16S rRNA. Functionally, forms an intersubunit bridge (bridge B4) with the 23S rRNA of the 50S subunit in the ribosome. In Protochlamydia amoebophila (strain UWE25), this protein is Small ribosomal subunit protein uS15.